A 372-amino-acid chain; its full sequence is Probable arabinan endo-1,5-alpha-L-arabinosidase B (372 aa).

The N-terminal stretch at methionine 1–cysteine 16 is a signal peptide. The span at serine 23–glutamate 34 shows a compositional bias: low complexity. A disordered region spans residues serine 23–alanine 52. Aspartate 59 acts as the Proton acceptor in catalysis. Asparagine 120 carries an N-linked (GlcNAc...) asparagine glycan. The active-site Proton donor is glutamate 252. An N-linked (GlcNAc...) asparagine glycan is attached at asparagine 363.

This sequence belongs to the glycosyl hydrolase 43 family.

It is found in the secreted. It catalyses the reaction Endohydrolysis of (1-&gt;5)-alpha-arabinofuranosidic linkages in (1-&gt;5)-arabinans.. It functions in the pathway glycan metabolism; L-arabinan degradation. Endo-1,5-alpha-L-arabinanase involved in degradation of pectin. Its preferred substrate is linear 1,5-alpha-L-arabinan. The polypeptide is Probable arabinan endo-1,5-alpha-L-arabinosidase B (abnB) (Aspergillus fumigatus (strain ATCC MYA-4609 / CBS 101355 / FGSC A1100 / Af293) (Neosartorya fumigata)).